We begin with the raw amino-acid sequence, 135 residues long: Small ribosomal subunit protein bS6 (135 aa).

The segment at 99-135 is disordered; the sequence is EKSAMLSHLDRNAHAGQDEERSRSPRRQRENAIERVE.

It belongs to the bacterial ribosomal protein bS6 family.

Functionally, binds together with bS18 to 16S ribosomal RNA. The sequence is that of Small ribosomal subunit protein bS6 from Bartonella tribocorum (strain CIP 105476 / IBS 506).